The chain runs to 137 residues: Large ribosomal subunit protein uL16 (137 aa).

Residues methionine 1–glutamine 13 are compositionally biased toward basic residues. Positions methionine 1–threonine 22 are disordered.

Belongs to the universal ribosomal protein uL16 family. Part of the 50S ribosomal subunit.

In terms of biological role, binds 23S rRNA and is also seen to make contacts with the A and possibly P site tRNAs. The sequence is that of Large ribosomal subunit protein uL16 from Polynucleobacter asymbioticus (strain DSM 18221 / CIP 109841 / QLW-P1DMWA-1) (Polynucleobacter necessarius subsp. asymbioticus).